The primary structure comprises 2850 residues: Hornerin (2850 aa).

The interval 1–81 (MPKLLQGVIT…TEYLLMIFKL (81 aa)) is S-100-like. 2 EF-hand domains span residues 13 to 48 (DVFY…LKNP) and 49 to 84 (NDPD…LVQA). Ca(2+) contacts are provided by T27, E32, D62, D64, N66, K68, and E73. Tandem repeats lie at residues 97-187 (SGSK…SDSH), 188-278 (QSSG…SSSG), 279-369 (SSSS…SGSG), 370-460 (HSSS…SGSG), 474-566 (HSSG…YGSG), 593-683 (QSSG…SGSG), 685-747 (SSSN…SSSG), 748-836 (LSSS…SASG), 839-875 (SSQG…SASH), 876-965 (HASG…SRSG), 966-1004 (QSSR…SGSG), 1007-1097 (PSPS…ASSG), and 1098-1188 (QSSS…SGSG). A compositionally biased stretch (basic and acidic residues) spans 100–110 (KLRDDTHQHQE). Disordered regions lie at residues 100 to 154 (KLRD…GTES) and 166 to 2817 (SGQH…KGGS). The segment covering 125–144 (SSFSHSSWSAGENDSYSRNV) has biased composition (polar residues). Low complexity-rich tracts occupy residues 167–192 (GQHN…SSGR) and 226–248 (GQSS…SQHG). Residues 249-259 (SGSGHSSGYGQ) are compositionally biased toward gly residues. 2 stretches are compositionally biased toward low complexity: residues 276 to 308 (SSGS…QSPS) and 317 to 421 (GHSS…SGSG). Residues 422 to 433 (QSPGHGQRGSGS) show a composition bias toward gly residues. Composition is skewed to low complexity over residues 449 to 465 (SSSS…SSGF) and 473 to 482 (EHSSGYTQHG). Over residues 483–493 (SGSGHSSGHGQ) the composition is skewed to gly residues. Composition is skewed to low complexity over residues 494–529 (HGSR…QSLG), 555–661 (SSSY…QSPS), 670–724 (GHSS…SHSS), 732–765 (RSGQ…SSGH), 782–806 (GSSS…SCGH), and 818–871 (GQHE…GQHE). Residues S659 and S661 each carry the phosphoserine modification. Gly residues predominate over residues 884–900 (GSGSGQSPGHGQRGSGS). S890 is modified (phosphoserine). 2 stretches are compositionally biased toward low complexity: residues 901-921 (GQSP…SSGR) and 931-996 (GFGH…SLGH). 2 positions are modified to phosphoserine: S993 and S1008. Composition is skewed to low complexity over residues 1019 to 1050 (GQSS…SSGL) and 1057 to 1115 (SGQS…SSGY). Residues 1116–1132 (GRQGSGSGQSPGHGQRG) show a composition bias toward gly residues. Composition is skewed to low complexity over residues 1133-1156 (SGSR…SSGQ) and 1166-1184 (GFGH…SQHG). Positions 1185–1195 (SGSGHSSGYGQ) are enriched in gly residues. R1205 carries the omega-N-methylarginine modification. Composition is skewed to low complexity over residues 1211–1232 (SSSG…SSGH) and 1253–1276 (GHSS…PYES). Copy 14 of the repeat occupies 1215–1305 (SSSHYGQHGS…AYSQHGSGSG (91 aa)). The span at 1280-1301 (HSSVFGQHESGSGHSSAYSQHG) shows a compositional bias: polar residues. Composition is skewed to low complexity over residues 1309 to 1322 (SQGQ…QSST), 1331 to 1349 (GQSS…SSGY), 1370 to 1390 (GHSS…SSGR), 1400 to 1438 (GFGH…GQSS), and 1445 to 1466 (SSSG…SLGH). 16 tandem repeats follow at residues 1332–1422 (QSSS…SGSG), 1423–1474 (HSSS…SGSG), 1477–1567 (PSPS…ASSG), 1568–1658 (QSSS…SGSG), 1685–1775 (SSSR…SGSG), 1802–1892 (QSSS…SGSG), 1893–1944 (HSSS…SGSG), 1947–2037 (PSPS…ASSG), 2038–2128 (QSSS…SGSG), 2155–2245 (SSSR…SGSG), 2272–2362 (QSSS…SGSG), 2363–2414 (HSSS…SGSG), 2417–2507 (PSPS…ASSG), 2508–2598 (QSSS…SGSG), 2625–2715 (SSSH…SGSG), and 2716–2806 (HFCS…SGSG). Phosphoserine is present on residues S1463 and S1478. Low complexity-rich tracts occupy residues 1489–1520 (GQSS…SSGL) and 1527–1585 (SGQS…SSGY). Residues 1586-1602 (GRQGSGSGQSPGHGQRG) show a composition bias toward gly residues. 2 stretches are compositionally biased toward low complexity: residues 1603–1626 (SGSR…SSGQ) and 1636–1654 (GFGH…SQHG). A compositionally biased stretch (gly residues) spans 1655 to 1665 (SGSGHSSGYGQ). The segment covering 1682–1702 (SSRSSSRYGQHGSGSRQSSGH) has biased composition (low complexity). A phosphoserine mark is found at S1712 and S1714. A compositionally biased stretch (low complexity) spans 1723 to 1746 (GHSSSHGQHGSGSGRSSSRGPYES). Over residues 1750–1771 (HSSVFGQHESGSGHSSAYSQHG) the composition is skewed to polar residues. Low complexity-rich tracts occupy residues 1779–1831 (SQGQ…QSPS), 1840–1860 (GHSS…SSGR), and 1870–1936 (GFGH…SLGH). A phosphoserine mark is found at S1829 and S1831. Phosphoserine is present on residues S1933 and S1948. Low complexity-rich tracts occupy residues 1959-1990 (GQSS…SSGL) and 1997-2055 (SGQS…SSGY). The span at 2056–2072 (GRQGSGSGQSPGHGQRG) shows a compositional bias: gly residues. Low complexity-rich tracts occupy residues 2073 to 2096 (SGSR…SSGQ) and 2106 to 2124 (GFGH…SQHG). Residues 2125 to 2135 (SGSGHSSGYGQ) are compositionally biased toward gly residues. Composition is skewed to low complexity over residues 2151–2172 (SSSG…SSGH) and 2193–2216 (GHSS…PYES). The span at 2220–2241 (HSSVFGQHESGSGHSSAYSQHG) shows a compositional bias: polar residues. 4 stretches are compositionally biased toward low complexity: residues 2249–2301 (SQGQ…QSPS), 2310–2330 (GHSS…SSGR), 2340–2378 (GFGH…GQSS), and 2385–2406 (SSSG…SLGH). Residues S2299 and S2301 each carry the phosphoserine modification. Phosphoserine occurs at positions 2403 and 2418. 2 stretches are compositionally biased toward low complexity: residues 2429–2460 (GQSS…SSGL) and 2467–2525 (SGQS…SSGY). Gly residues predominate over residues 2526-2542 (GRQGSGSGQSPGHGQRG). 2 stretches are compositionally biased toward low complexity: residues 2543–2566 (SGSR…SSGQ) and 2576–2594 (GFGH…SQHG). Over residues 2595–2605 (SGSGHSSGYGQ) the composition is skewed to gly residues. Residues 2621–2642 (SSSGSSSHYGQHGSGSRQSSGH) show a composition bias toward low complexity. A phosphoserine mark is found at S2652 and S2654. Residues 2663-2682 (GHSSSHGQHGSGSGRSSSRG) are compositionally biased toward low complexity. Residues 2698-2711 (ESGSGHSSAYSQHG) are compositionally biased toward polar residues. Composition is skewed to low complexity over residues 2719 to 2732 (SQGQ…QSST), 2741 to 2759 (GQSS…SSGY), and 2795 to 2816 (SSGY…CKGG).

The protein belongs to the S100-fused protein family. In the N-terminal section; belongs to the S-100 family. Processed during the process of epidermal differentiation. In terms of processing, forms covalent cross-links mediated by transglutaminase TGM3, between glutamine and the epsilon-amino group of lysine residues (in vitro). As to expression, expressed in cornified epidermis, psoriatic and regenerating skin after wounding. Found in the upper granular layer and in the entire cornified layer of epidermis.

It is found in the cytoplasmic granule. Its function is as follows. Component of the epidermal cornified cell envelopes. The protein is Hornerin (HRNR) of Homo sapiens (Human).